A 765-amino-acid polypeptide reads, in one-letter code: Multifunctional tryptophan biosynthesis protein (765 aa).

In terms of domain architecture, Glutamine amidotransferase type-1 spans 2-196 (ATLLIDNYDS…LSLRGGNWDE (195 aa)). 53–55 (GPG) contributes to the L-glutamine binding site. C81 acts as the Nucleophile; for GATase activity in catalysis. L-glutamine is bound by residues Q85 and 131–132 (SL). Catalysis depends on for GATase activity residues H170 and E172. The indole-3-glycerol phosphate synthase stretch occupies residues 231–494 (TILSRIYAQR…NLKEFVAELL (264 aa)). The interval 512-765 (QVKICGISSV…VEKAKSINLQ (254 aa)) is N-(5'-phosphoribosyl)anthranilate isomerase.

The enzyme catalyses N-(5-phospho-beta-D-ribosyl)anthranilate = 1-(2-carboxyphenylamino)-1-deoxy-D-ribulose 5-phosphate. It catalyses the reaction 1-(2-carboxyphenylamino)-1-deoxy-D-ribulose 5-phosphate + H(+) = (1S,2R)-1-C-(indol-3-yl)glycerol 3-phosphate + CO2 + H2O. It carries out the reaction chorismate + L-glutamine = anthranilate + pyruvate + L-glutamate + H(+). It functions in the pathway amino-acid biosynthesis; L-tryptophan biosynthesis; L-tryptophan from chorismate: step 1/5. The protein operates within amino-acid biosynthesis; L-tryptophan biosynthesis; L-tryptophan from chorismate: step 3/5. It participates in amino-acid biosynthesis; L-tryptophan biosynthesis; L-tryptophan from chorismate: step 4/5. Its function is as follows. Trifunctional enzyme bearing the Gln amidotransferase (GATase) domain of anthranilate synthase, indole-glycerolphosphate synthase, and phosphoribosylanthranilate isomerase activities. The sequence is that of Multifunctional tryptophan biosynthesis protein (trp1) from Phycomyces blakesleeanus.